The primary structure comprises 88 residues: Small ribosomal subunit protein uS15 (88 aa).

Basic and acidic residues predominate over residues 1–20 (MLATEKKQELIDQYKRHEGD). The disordered stretch occupies residues 1–21 (MLATEKKQELIDQYKRHEGDT).

Belongs to the universal ribosomal protein uS15 family. In terms of assembly, part of the 30S ribosomal subunit. Forms a bridge to the 50S subunit in the 70S ribosome, contacting the 23S rRNA.

Functionally, one of the primary rRNA binding proteins, it binds directly to 16S rRNA where it helps nucleate assembly of the platform of the 30S subunit by binding and bridging several RNA helices of the 16S rRNA. Its function is as follows. Forms an intersubunit bridge (bridge B4) with the 23S rRNA of the 50S subunit in the ribosome. This chain is Small ribosomal subunit protein uS15, found in Syntrophotalea carbinolica (strain DSM 2380 / NBRC 103641 / GraBd1) (Pelobacter carbinolicus).